A 210-amino-acid chain; its full sequence is Proteasome subunit beta (210 aa).

The propeptide at 1-9 is removed in mature form; by autocatalysis; it reads MDNDKYLKG. Thr10 functions as the Nucleophile in the catalytic mechanism.

This sequence belongs to the peptidase T1B family. In terms of assembly, the 20S proteasome core is composed of 14 alpha and 14 beta subunits that assemble into four stacked heptameric rings, resulting in a barrel-shaped structure. The two inner rings, each composed of seven catalytic beta subunits, are sandwiched by two outer rings, each composed of seven alpha subunits. The catalytic chamber with the active sites is on the inside of the barrel. Has a gated structure, the ends of the cylinder being occluded by the N-termini of the alpha-subunits. Is capped at one or both ends by the proteasome regulatory ATPase, PAN.

It localises to the cytoplasm. It catalyses the reaction Cleavage of peptide bonds with very broad specificity.. The formation of the proteasomal ATPase PAN-20S proteasome complex, via the docking of the C-termini of PAN into the intersubunit pockets in the alpha-rings, triggers opening of the gate for substrate entry. Interconversion between the open-gate and close-gate conformations leads to a dynamic regulation of the 20S proteasome proteolysis activity. In terms of biological role, component of the proteasome core, a large protease complex with broad specificity involved in protein degradation. In Methanosarcina mazei (strain ATCC BAA-159 / DSM 3647 / Goe1 / Go1 / JCM 11833 / OCM 88) (Methanosarcina frisia), this protein is Proteasome subunit beta.